We begin with the raw amino-acid sequence, 258 residues long: 5'-nucleotidase SurE (258 aa).

Residues D18, D19, S49, and N102 each contribute to the a divalent metal cation site.

It belongs to the SurE nucleotidase family. A divalent metal cation serves as cofactor.

The protein localises to the cytoplasm. The catalysed reaction is a ribonucleoside 5'-phosphate + H2O = a ribonucleoside + phosphate. In terms of biological role, nucleotidase that shows phosphatase activity on nucleoside 5'-monophosphates. The polypeptide is 5'-nucleotidase SurE (Vibrio parahaemolyticus serotype O3:K6 (strain RIMD 2210633)).